Consider the following 267-residue polypeptide: Glutamate 5-kinase (267 aa).

Lysine 14 is an ATP binding site. Substrate contacts are provided by serine 54, aspartate 141, and asparagine 157. ATP-binding positions include 177 to 178 (SD) and 219 to 225 (TGGMLSK).

Belongs to the glutamate 5-kinase family.

It localises to the cytoplasm. The catalysed reaction is L-glutamate + ATP = L-glutamyl 5-phosphate + ADP. Its pathway is amino-acid biosynthesis; L-proline biosynthesis; L-glutamate 5-semialdehyde from L-glutamate: step 1/2. Functionally, catalyzes the transfer of a phosphate group to glutamate to form L-glutamate 5-phosphate. The sequence is that of Glutamate 5-kinase from Streptococcus agalactiae serotype Ia (strain ATCC 27591 / A909 / CDC SS700).